Consider the following 363-residue polypeptide: Phosphoribosylformylglycinamidine cyclo-ligase (363 aa).

The protein belongs to the AIR synthase family.

The protein resides in the cytoplasm. It catalyses the reaction 2-formamido-N(1)-(5-O-phospho-beta-D-ribosyl)acetamidine + ATP = 5-amino-1-(5-phospho-beta-D-ribosyl)imidazole + ADP + phosphate + H(+). The protein operates within purine metabolism; IMP biosynthesis via de novo pathway; 5-amino-1-(5-phospho-D-ribosyl)imidazole from N(2)-formyl-N(1)-(5-phospho-D-ribosyl)glycinamide: step 2/2. This is Phosphoribosylformylglycinamidine cyclo-ligase from Parvibaculum lavamentivorans (strain DS-1 / DSM 13023 / NCIMB 13966).